We begin with the raw amino-acid sequence, 368 residues long: Transaldolase (368 aa).

The Schiff-base intermediate with substrate role is filled by Lys-140.

Belongs to the transaldolase family. Type 2 subfamily.

It localises to the cytoplasm. The catalysed reaction is D-sedoheptulose 7-phosphate + D-glyceraldehyde 3-phosphate = D-erythrose 4-phosphate + beta-D-fructose 6-phosphate. It functions in the pathway carbohydrate degradation; pentose phosphate pathway; D-glyceraldehyde 3-phosphate and beta-D-fructose 6-phosphate from D-ribose 5-phosphate and D-xylulose 5-phosphate (non-oxidative stage): step 2/3. Its function is as follows. Transaldolase is important for the balance of metabolites in the pentose-phosphate pathway. The chain is Transaldolase from Kocuria rhizophila (strain ATCC 9341 / DSM 348 / NBRC 103217 / DC2201).